Consider the following 181-residue polypeptide: ATP-dependent protease subunit HslV (181 aa).

The active site involves T8. Residues G165, C168, and T171 each coordinate Na(+).

It belongs to the peptidase T1B family. HslV subfamily. In terms of assembly, a double ring-shaped homohexamer of HslV is capped on each side by a ring-shaped HslU homohexamer. The assembly of the HslU/HslV complex is dependent on binding of ATP.

It localises to the cytoplasm. The enzyme catalyses ATP-dependent cleavage of peptide bonds with broad specificity.. Allosterically activated by HslU binding. Functionally, protease subunit of a proteasome-like degradation complex believed to be a general protein degrading machinery. This is ATP-dependent protease subunit HslV from Oceanobacillus iheyensis (strain DSM 14371 / CIP 107618 / JCM 11309 / KCTC 3954 / HTE831).